We begin with the raw amino-acid sequence, 201 residues long: Putative ankyrin repeat protein R868 (201 aa).

ANK repeat units follow at residues 125-154 (YENN…NCYF) and 156-188 (KAKK…DYNF).

The polypeptide is Putative ankyrin repeat protein R868 (Acanthamoeba polyphaga (Amoeba)).